The sequence spans 411 residues: Carbamoyl phosphate synthase arginine-specific small chain (411 aa).

L-glutamine-binding residues include Ser50, Gly232, and Gly234. Positions Asn185–Gln376 constitute a Glutamine amidotransferase type-1 domain. The Nucleophile role is filled by Cys264. L-glutamine is bound by residues Leu265, Gln268, Asn306, Gly308, and Tyr309. Active-site residues include His349 and Glu351.

This sequence belongs to the CarA family. As to quaternary structure, heterodimer composed of 2 chains; the small (or glutamine) chain promotes the hydrolysis of glutamine to ammonia, which is used by the large (or ammonia) chain to synthesize carbamoyl phosphate.

It localises to the cytoplasm. The enzyme catalyses hydrogencarbonate + L-glutamine + 2 ATP + H2O = carbamoyl phosphate + L-glutamate + 2 ADP + phosphate + 2 H(+). It carries out the reaction L-glutamine + H2O = L-glutamate + NH4(+). It participates in amino-acid biosynthesis; L-arginine biosynthesis; carbamoyl phosphate from bicarbonate: step 1/1. In terms of biological role, small subunit of the arginine-specific carbamoyl phosphate synthase (CPSase). CPSase catalyzes the formation of carbamoyl phosphate from the ammonia moiety of glutamine, carbonate, and phosphate donated by ATP, constituting the first step of 2 biosynthetic pathways, one leading to arginine and/or urea and the other to pyrimidine nucleotides. The small subunit (glutamine amidotransferase) binds and cleaves glutamine to supply the large subunit with the substrate ammonia. This chain is Carbamoyl phosphate synthase arginine-specific small chain (CPA1), found in Saccharomyces cerevisiae (strain ATCC 204508 / S288c) (Baker's yeast).